Consider the following 79-residue polypeptide: Putative antitoxin VapB1 (79 aa).

Its function is as follows. Antitoxin component of a possible type II toxin-antitoxin (TA) system. The cognate toxin is VapC1. In Mycobacterium tuberculosis (strain ATCC 25618 / H37Rv), this protein is Putative antitoxin VapB1 (vapB1).